A 228-amino-acid polypeptide reads, in one-letter code: Pyridoxal phosphate homeostasis protein (228 aa).

An N6-(pyridoxal phosphate)lysine modification is found at Lys35.

It belongs to the pyridoxal phosphate-binding protein YggS/PROSC family.

Functionally, pyridoxal 5'-phosphate (PLP)-binding protein, which is involved in PLP homeostasis. The protein is Pyridoxal phosphate homeostasis protein of Aquifex aeolicus (strain VF5).